Reading from the N-terminus, the 217-residue chain is ATP phosphoribosyltransferase (217 aa).

It belongs to the ATP phosphoribosyltransferase family. Short subfamily. As to quaternary structure, heteromultimer composed of HisG and HisZ subunits.

The protein resides in the cytoplasm. The enzyme catalyses 1-(5-phospho-beta-D-ribosyl)-ATP + diphosphate = 5-phospho-alpha-D-ribose 1-diphosphate + ATP. The protein operates within amino-acid biosynthesis; L-histidine biosynthesis; L-histidine from 5-phospho-alpha-D-ribose 1-diphosphate: step 1/9. Catalyzes the condensation of ATP and 5-phosphoribose 1-diphosphate to form N'-(5'-phosphoribosyl)-ATP (PR-ATP). Has a crucial role in the pathway because the rate of histidine biosynthesis seems to be controlled primarily by regulation of HisG enzymatic activity. This chain is ATP phosphoribosyltransferase, found in Polaromonas naphthalenivorans (strain CJ2).